The sequence spans 446 residues: Enolase 1 (446 aa).

The substrate site is built by H164 and E173. E216 acts as the Proton donor in catalysis. Positions 251, 302, and 329 each coordinate Mg(2+). Residues E302 and D329 each coordinate substrate. K354 functions as the Proton acceptor in the catalytic mechanism. Substrate contacts are provided by residues 381 to 384 (SHRS) and K405.

Belongs to the enolase family. In terms of assembly, homodimer. The cofactor is Mg(2+).

The protein resides in the cytoplasm. The enzyme catalyses (2R)-2-phosphoglycerate = phosphoenolpyruvate + H2O. It participates in carbohydrate degradation; glycolysis; pyruvate from D-glyceraldehyde 3-phosphate: step 4/5. This Zea mays (Maize) protein is Enolase 1 (ENO1).